The sequence spans 103 residues: Small ribosomal subunit protein uS10 (103 aa).

It belongs to the universal ribosomal protein uS10 family. Part of the 30S ribosomal subunit.

Involved in the binding of tRNA to the ribosomes. The sequence is that of Small ribosomal subunit protein uS10 from Stenotrophomonas maltophilia (strain R551-3).